A 150-amino-acid polypeptide reads, in one-letter code: Dual specificity protein phosphatase 23 (150 aa).

Residues 7–150 enclose the Tyrosine-protein phosphatase domain; the sequence is NFSWVLPGRL…AVFQFYQRTK (144 aa). The active-site Phosphocysteine intermediate is the Cys95.

The protein belongs to the protein-tyrosine phosphatase family. Non-receptor class dual specificity subfamily. As to expression, widely expressed.

Its subcellular location is the cytoplasm. It localises to the cytosol. The protein localises to the nucleus. The catalysed reaction is O-phospho-L-tyrosyl-[protein] + H2O = L-tyrosyl-[protein] + phosphate. It carries out the reaction O-phospho-L-seryl-[protein] + H2O = L-seryl-[protein] + phosphate. It catalyses the reaction O-phospho-L-threonyl-[protein] + H2O = L-threonyl-[protein] + phosphate. Functionally, protein phosphatase that mediates dephosphorylation of proteins phosphorylated on Tyr and Ser/Thr residues. In vitro, it can dephosphorylate p44-ERK1 (MAPK3) but not p54 SAPK-beta (MAPK10) in vitro. Able to enhance activation of JNK and p38 (MAPK14). The polypeptide is Dual specificity protein phosphatase 23 (Dusp23) (Mus musculus (Mouse)).